Consider the following 357-residue polypeptide: MAGNTIGQLFRVTTFGESHGIALGCIVDGVPPNLELSEKDIQPDLDRRKPGTSRYTTPRREDDEVQILSGVFEGKTTGTSIGMIIKNGDQRSQDYGDIKDRFRPGHADFTYQQKYGIRDYRGGGRSSARETAMRVAAGAIAKKYLREHFGIEVRGFLSQIGNIKIAPQKVGQIDWEKVNSNPFFCPDESAVEKFDELIRELKKEGDSIGAKLTVIAENVPVGLGEPVFDRLDADLAHALMGINAVKGVEIGDGFAVVKQRGSEHRDEMTPNGFESNHAGGILGGISSGQPIIATIALKPTSSITIPGRSINLNGKPVEVVTKGRHDPCVGIRAVPIAEAMVAIVLLDHLLRFKAQCK.

Residues 38-49 (EKDIQPDLDRRK) show a composition bias toward basic and acidic residues. The segment at 38–60 (EKDIQPDLDRRKPGTSRYTTPRR) is disordered. R48 and R54 together coordinate NADP(+). FMN-binding positions include 125-127 (RSS), 243-244 (NA), G283, 298-302 (KPTSS), and R324.

Belongs to the chorismate synthase family. In terms of assembly, homotetramer. FMNH2 serves as cofactor.

It carries out the reaction 5-O-(1-carboxyvinyl)-3-phosphoshikimate = chorismate + phosphate. It functions in the pathway metabolic intermediate biosynthesis; chorismate biosynthesis; chorismate from D-erythrose 4-phosphate and phosphoenolpyruvate: step 7/7. In terms of biological role, catalyzes the anti-1,4-elimination of the C-3 phosphate and the C-6 proR hydrogen from 5-enolpyruvylshikimate-3-phosphate (EPSP) to yield chorismate, which is the branch point compound that serves as the starting substrate for the three terminal pathways of aromatic amino acid biosynthesis. This reaction introduces a second double bond into the aromatic ring system. This Haemophilus influenzae (strain PittEE) protein is Chorismate synthase.